Reading from the N-terminus, the 231-residue chain is Orotidine 5'-phosphate decarboxylase (231 aa).

Residues aspartate 9, lysine 34, 62-71, threonine 117, arginine 179, glutamine 188, glycine 208, and arginine 209 each bind substrate; that span reads DLKLHDIPSV. Catalysis depends on lysine 64, which acts as the Proton donor.

The protein belongs to the OMP decarboxylase family. Type 1 subfamily. Homodimer.

The enzyme catalyses orotidine 5'-phosphate + H(+) = UMP + CO2. It participates in pyrimidine metabolism; UMP biosynthesis via de novo pathway; UMP from orotate: step 2/2. Catalyzes the decarboxylation of orotidine 5'-monophosphate (OMP) to uridine 5'-monophosphate (UMP). This is Orotidine 5'-phosphate decarboxylase from Aquifex aeolicus (strain VF5).